Here is a 172-residue protein sequence, read N- to C-terminus: Adenine phosphoribosyltransferase (172 aa).

Belongs to the purine/pyrimidine phosphoribosyltransferase family. In terms of assembly, homodimer.

The protein resides in the cytoplasm. The catalysed reaction is AMP + diphosphate = 5-phospho-alpha-D-ribose 1-diphosphate + adenine. It participates in purine metabolism; AMP biosynthesis via salvage pathway; AMP from adenine: step 1/1. In terms of biological role, catalyzes a salvage reaction resulting in the formation of AMP, that is energically less costly than de novo synthesis. The chain is Adenine phosphoribosyltransferase from Clostridium perfringens (strain ATCC 13124 / DSM 756 / JCM 1290 / NCIMB 6125 / NCTC 8237 / Type A).